Consider the following 167-residue polypeptide: Ammonium/H(+) antiporter subunit AmhM (167 aa).

One can recognise an RCK C-terminal domain in the interval 79–163 (IDRIKLIRKQ…IQKFEELCAC (85 aa)).

As to quaternary structure, interacts with AmhT.

It is found in the cell membrane. In terms of biological role, modulates the activity of the ammonium/proton antiporter AmhT. This is Ammonium/H(+) antiporter subunit AmhM (amhM) from Alkalihalophilus pseudofirmus (strain ATCC BAA-2126 / JCM 17055 / OF4) (Bacillus pseudofirmus).